We begin with the raw amino-acid sequence, 505 residues long: Apolipoprotein N-acyltransferase (505 aa).

Helical transmembrane passes span Phe26–Leu46, Phe66–Ile86, Leu89–Leu109, Leu129–Leu149, Phe161–Leu181, and Ile186–Ile206. One can recognise a CN hydrolase domain in the interval Ile225–Pro471. Glu264 serves as the catalytic Proton acceptor. Residue Lys330 is part of the active site. Cys382 serves as the catalytic Nucleophile. A helical membrane pass occupies residues Phe481 to Pro501.

It belongs to the CN hydrolase family. Apolipoprotein N-acyltransferase subfamily.

The protein localises to the cell inner membrane. It catalyses the reaction N-terminal S-1,2-diacyl-sn-glyceryl-L-cysteinyl-[lipoprotein] + a glycerophospholipid = N-acyl-S-1,2-diacyl-sn-glyceryl-L-cysteinyl-[lipoprotein] + a 2-acyl-sn-glycero-3-phospholipid + H(+). The protein operates within protein modification; lipoprotein biosynthesis (N-acyl transfer). In terms of biological role, catalyzes the phospholipid dependent N-acylation of the N-terminal cysteine of apolipoprotein, the last step in lipoprotein maturation. This chain is Apolipoprotein N-acyltransferase, found in Vibrio parahaemolyticus serotype O3:K6 (strain RIMD 2210633).